The primary structure comprises 473 residues: Photosystem II CP43 reaction center protein (473 aa).

The propeptide occupies Met1–Glu14. At Thr15 the chain carries N-acetylthreonine. Thr15 carries the phosphothreonine modification. The next 5 helical transmembrane spans lie at Leu69–Ala93, Ile134–Asn155, Lys178–Thr200, Lys255–Ser275, and Trp291–Ala312. Glu367 contributes to the [CaMn4O5] cluster binding site. The helical transmembrane segment at Arg447–Pro471 threads the bilayer.

It belongs to the PsbB/PsbC family. PsbC subfamily. As to quaternary structure, PSII is composed of 1 copy each of membrane proteins PsbA, PsbB, PsbC, PsbD, PsbE, PsbF, PsbH, PsbI, PsbJ, PsbK, PsbL, PsbM, PsbT, PsbX, PsbY, PsbZ, Psb30/Ycf12, at least 3 peripheral proteins of the oxygen-evolving complex and a large number of cofactors. It forms dimeric complexes. Binds multiple chlorophylls and provides some of the ligands for the Ca-4Mn-5O cluster of the oxygen-evolving complex. It may also provide a ligand for a Cl- that is required for oxygen evolution. PSII binds additional chlorophylls, carotenoids and specific lipids. is required as a cofactor.

Its subcellular location is the plastid. The protein localises to the chloroplast thylakoid membrane. Its function is as follows. One of the components of the core complex of photosystem II (PSII). It binds chlorophyll and helps catalyze the primary light-induced photochemical processes of PSII. PSII is a light-driven water:plastoquinone oxidoreductase, using light energy to abstract electrons from H(2)O, generating O(2) and a proton gradient subsequently used for ATP formation. This is Photosystem II CP43 reaction center protein from Huperzia lucidula (Shining clubmoss).